The primary structure comprises 494 residues: MNKYLVPDSGLTSLSAAELAEKIHSREVTSREVTQAHLDRINDVDGTLHAFLHVGVEEALAAADAVDESLDKGEAPASALAGVPLALKDVFVTTDAPTTCASKMLEGYVAPYDATVTKKIREAGIPILGKTNMDEFAMGSSTENSAYGPTLNPWDIERTPGGSGGGTSAALASGEAPLGIGTDTGGSIRQPAALTNTVGVKPTYGTVSRYGLVACASSLDQGGPTARTVLDTALLHEVIAGHDKYDATSVNRAVAPVVAAAREGARGDLKGTKIGVVKQFDREGYQPGVLEQFHKSVEQLTAQGAEIVEVDCPHFDDALAAYYLILPCEVSSNLARFDGMRYGLREGDDGTHSAEEVMSLSRAAGFGPEVKRRIILGTYALSVGYYDAYYLQAQRVRTLIAQDFAVAYDKCDVLVSPTTPTTAFKLGEKVSDPLAMYNFDLCTLPLNLAGLCGMSLPSGLAPDSQLPTGLQIMAPAFQDDRLYKVGAAFEVGQK.

Active-site charge relay system residues include Lys-88 and Ser-163. Ser-187 functions as the Acyl-ester intermediate in the catalytic mechanism.

The protein belongs to the amidase family. GatA subfamily. As to quaternary structure, heterotrimer of A, B and C subunits.

The enzyme catalyses L-glutamyl-tRNA(Gln) + L-glutamine + ATP + H2O = L-glutaminyl-tRNA(Gln) + L-glutamate + ADP + phosphate + H(+). Its function is as follows. Allows the formation of correctly charged Gln-tRNA(Gln) through the transamidation of misacylated Glu-tRNA(Gln) in organisms which lack glutaminyl-tRNA synthetase. The reaction takes place in the presence of glutamine and ATP through an activated gamma-phospho-Glu-tRNA(Gln). This Corynebacterium diphtheriae (strain ATCC 700971 / NCTC 13129 / Biotype gravis) protein is Glutamyl-tRNA(Gln) amidotransferase subunit A.